A 232-amino-acid chain; its full sequence is 2,3,4,5-tetrahydropyridine-2,6-dicarboxylate N-acetyltransferase (232 aa).

It belongs to the transferase hexapeptide repeat family. DapH subfamily.

It carries out the reaction (S)-2,3,4,5-tetrahydrodipicolinate + acetyl-CoA + H2O = L-2-acetamido-6-oxoheptanedioate + CoA. The protein operates within amino-acid biosynthesis; L-lysine biosynthesis via DAP pathway; LL-2,6-diaminopimelate from (S)-tetrahydrodipicolinate (acetylase route): step 1/3. Functionally, catalyzes the transfer of an acetyl group from acetyl-CoA to tetrahydrodipicolinate. This is 2,3,4,5-tetrahydropyridine-2,6-dicarboxylate N-acetyltransferase from Streptococcus pneumoniae serotype 4 (strain ATCC BAA-334 / TIGR4).